The chain runs to 71 residues: MKADIHPNYEAVAVTCSCGNKFETRSTLGSTLAIDVCNLCHPFYTGKQKVLDTGGRVQRFADRFGMFGTKK.

The Zn(2+) site is built by C16, C18, C37, and C40.

Belongs to the bacterial ribosomal protein bL31 family. Type A subfamily. As to quaternary structure, part of the 50S ribosomal subunit. Zn(2+) is required as a cofactor.

Its function is as follows. Binds the 23S rRNA. The protein is Large ribosomal subunit protein bL31 of Pseudomonas putida (strain W619).